The sequence spans 570 residues: Putative diflavin flavoprotein A 5 (570 aa).

The interval 38–231 is zinc metallo-hydrolase; the sequence is ERGTTSNSYV…LQVRLYAVGH (194 aa). The region spanning 260 to 402 is the Flavodoxin-like domain; sequence VALLYASAYG…VGTDFAQTLK (143 aa). Residues 421–570 form a flavodoxin-reductase-like region; it reads VGRIVGSVCV…INHRKTGNHY (150 aa).

This sequence in the N-terminal section; belongs to the zinc metallo-hydrolase group 3 family. In the C-terminal section; belongs to the flavodoxin reductase family. Fe cation serves as cofactor.

In terms of biological role, mediates electron transfer from NADH to oxygen, reducing it to water. This modular protein has 3 redox cofactors, in other organisms the same activity requires 2 or 3 proteins. This chain is Putative diflavin flavoprotein A 5 (dfa5), found in Nostoc sp. (strain PCC 7120 / SAG 25.82 / UTEX 2576).